Reading from the N-terminus, the 346-residue chain is MKVLGIETSCDDCCVAVVENGIHILSNIKLNQTEHKKYYGIVPEIASRLHTEAIMSVCIKALKKANTKISEIDLIAVTSRPGLIGSLIVGLNFAKGLAISLKKPIICIDHILGHLYAPLMHSKIEYPFISLLLSGGHTLIAKQKNFDDVEILGRTLDDACGEAFDKVAKHYDMGFPGGPNIEQISKNGDENTFQFPVTTFKKKENWYDFSYSGLKTACIHQLEKFKSKDNPTTKNNIAASFQKAAFENLITPLKRAIKDTQINKLVIAGGVASNLYLREKIDKLKIQTYYPPLDLCTDNGAMIAGLGFNMYLKYGESPIEIDANSRIENYKNQYRGKNNEKNFSNA.

The Fe cation site is built by His-110 and His-114. Residues 132 to 136 (LLSGG), Asp-165, Gly-178, and Asn-274 each bind substrate. A Fe cation-binding site is contributed by Asp-298.

It belongs to the KAE1 / TsaD family. Fe(2+) serves as cofactor.

It is found in the cytoplasm. The enzyme catalyses L-threonylcarbamoyladenylate + adenosine(37) in tRNA = N(6)-L-threonylcarbamoyladenosine(37) in tRNA + AMP + H(+). Required for the formation of a threonylcarbamoyl group on adenosine at position 37 (t(6)A37) in tRNAs that read codons beginning with adenine. Is involved in the transfer of the threonylcarbamoyl moiety of threonylcarbamoyl-AMP (TC-AMP) to the N6 group of A37, together with TsaE and TsaB. TsaD likely plays a direct catalytic role in this reaction. This Borreliella burgdorferi (strain ATCC 35210 / DSM 4680 / CIP 102532 / B31) (Borrelia burgdorferi) protein is tRNA N6-adenosine threonylcarbamoyltransferase.